Here is a 122-residue protein sequence, read N- to C-terminus: Antitoxin protein TsiV3 (122 aa).

The signal sequence occupies residues 1-24; the sequence is MNNLLSAYVTMLLILLSISGGAIA. 2 disulfide bridges follow: Cys-28–Cys-41 and Cys-82–Cys-100.

In terms of assembly, homodimer; dimerization is critical for inhibitory activity. Forms a heterotetramer with VgrG3 composed of one TsiV3 homodimer and two VgrG3 molecules.

Functionally, immunity protein that plays a role in preventing early activation of toxin VgrG3. The protein is Antitoxin protein TsiV3 of Vibrio cholerae serotype O1 (strain ATCC 39315 / El Tor Inaba N16961).